Consider the following 378-residue polypeptide: Anhydro-N-acetylmuramic acid kinase 2 (378 aa).

14–22 (GTVLDGNID) provides a ligand contact to ATP.

Belongs to the anhydro-N-acetylmuramic acid kinase family.

The catalysed reaction is 1,6-anhydro-N-acetyl-beta-muramate + ATP + H2O = N-acetyl-D-muramate 6-phosphate + ADP + H(+). Its pathway is amino-sugar metabolism; 1,6-anhydro-N-acetylmuramate degradation. It functions in the pathway cell wall biogenesis; peptidoglycan recycling. Catalyzes the specific phosphorylation of 1,6-anhydro-N-acetylmuramic acid (anhMurNAc) with the simultaneous cleavage of the 1,6-anhydro ring, generating MurNAc-6-P. Is required for the utilization of anhMurNAc either imported from the medium or derived from its own cell wall murein, and thus plays a role in cell wall recycling. In Jannaschia sp. (strain CCS1), this protein is Anhydro-N-acetylmuramic acid kinase 2.